The primary structure comprises 499 residues: Interleukin-17 receptor B (499 aa).

An N-terminal signal peptide occupies residues 1-17; that stretch reads MLLVLLILAASCRSALP. The Extracellular portion of the chain corresponds to 18 to 286; the sequence is REPTIQCGSE…PDDNRRMLGG (269 aa). N-linked (GlcNAc...) asparagine glycosylation is found at Asn-67, Asn-103, Asn-156, and Asn-197. The helical transmembrane segment at 287–307 threads the bilayer; the sequence is WLPLFLVLLVAVWVLAAGIYL. Topologically, residues 308-499 are cytoplasmic; the sequence is TWRQGRSTKT…QACHDSCSPL (192 aa). The 147-residue stretch at 328–474 folds into the SEFIR domain; the sequence is LIKVLVVYPS…LMKDATAFHT (147 aa).

Interacts with DAZAP2. Interacts with TRAF3IP2. In terms of tissue distribution, liver and testis. Expressed at lower level in kidney and lung. Expressed in selected T-cell, B-cell and myeloid cell lines.

It is found in the cell membrane. Its subcellular location is the secreted. Receptor for the pro-inflammatory cytokines IL17B and IL17E. May play a role in controlling the growth and/or differentiation of hematopoietic cells. This chain is Interleukin-17 receptor B (Il17rb), found in Mus musculus (Mouse).